The chain runs to 628 residues: Phosphomethylpyrimidine synthase (628 aa).

Polar residues predominate over residues 1–14 (MTISDIGSQATTHT). Residues 1–37 (MTISDIGSQATTHTPVKASKADALKTPAHRSETDARF) form a disordered region. Basic and acidic residues predominate over residues 19-37 (SKADALKTPAHRSETDARF). Substrate-binding positions include asparagine 260, methionine 289, tyrosine 318, histidine 354, 374–376 (SRG), 415–418 (DGLR), and glutamate 454. Histidine 458 provides a ligand contact to Zn(2+). Residue tyrosine 481 participates in substrate binding. Histidine 522 is a binding site for Zn(2+). [4Fe-4S] cluster contacts are provided by cysteine 602, cysteine 605, and cysteine 610.

Belongs to the ThiC family. Homodimer. [4Fe-4S] cluster is required as a cofactor.

It catalyses the reaction 5-amino-1-(5-phospho-beta-D-ribosyl)imidazole + S-adenosyl-L-methionine = 4-amino-2-methyl-5-(phosphooxymethyl)pyrimidine + CO + 5'-deoxyadenosine + formate + L-methionine + 3 H(+). Its pathway is cofactor biosynthesis; thiamine diphosphate biosynthesis. In terms of biological role, catalyzes the synthesis of the hydroxymethylpyrimidine phosphate (HMP-P) moiety of thiamine from aminoimidazole ribotide (AIR) in a radical S-adenosyl-L-methionine (SAM)-dependent reaction. The polypeptide is Phosphomethylpyrimidine synthase (Psychrobacter cryohalolentis (strain ATCC BAA-1226 / DSM 17306 / VKM B-2378 / K5)).